The primary structure comprises 282 residues: Glycine betaine transport system permease protein OpuAB (282 aa).

Residues 1–18 (MDRLPRIPLADIIDRFVD) lie on the Extracellular side of the membrane. A helical transmembrane segment spans residues 19-39 (WITMTFGGFFDGIANGLAAFV). At 40–44 (NGIVT) the chain is on the cytoplasmic side. A helical membrane pass occupies residues 45-65 (GLGFIPSILLTIIFAALAWWI). The Extracellular portion of the chain corresponds to 66–69 (STRG). Residues 70–90 (IALFTLIGFLLIDYLGYWDPM) form a helical membrane-spanning segment. The ABC transmembrane type-1 domain occupies 90–269 (MLQTLALVLT…IVAITLDRIT (180 aa)). At 91-93 (LQT) the chain is on the cytoplasmic side. A helical transmembrane segment spans residues 94–114 (LALVLTSVIISIVVGVPIGIW). Topologically, residues 115 to 137 (ASQKETVRRIVTPILDLMQTMPA) are extracellular. Residues 138-158 (FVYLLPAIFFFNIGVVPGVVA) form a helical membrane-spanning segment. At 159-215 (SVIFAMPPTIRMTVLGIKQVPADLIEATEAFGSTTAQRLFKVQLPLATKTILAGINQ) the chain is on the cytoplasmic side. A helical membrane pass occupies residues 216–236 (SIMLALSMVVIAAMVGAPGLG). The Extracellular segment spans residues 237 to 242 (SEVYSA). Residues 243-263 (VTQLKTGVGVEAGIAIVIVAI) traverse the membrane as a helical segment. The Cytoplasmic segment spans residues 264-282 (TLDRITQNIKVKKKSRGNA).

The protein belongs to the binding-protein-dependent transport system permease family. CysTW subfamily. The complex is composed of two ATP-binding proteins (OpuAA), two transmembrane proteins (OpuAB) and a solute-binding protein (OpuAC).

Its subcellular location is the cell membrane. Involved in a multicomponent binding-protein-dependent transport system for glycine betaine; probably responsible for the translocation of the substrate across the membrane. The sequence is that of Glycine betaine transport system permease protein OpuAB (opuAB) from Bacillus subtilis (strain 168).